Here is a 445-residue protein sequence, read N- to C-terminus: Glycine betaine monooxygenase oxygenase subunit (445 aa).

Residues 73–180 (WLFVGMTCEI…VTHAGGFLFV (108 aa)) enclose the Rieske domain. [2Fe-2S] cluster is bound by residues Cys-115, His-117, Cys-135, and His-138. His-234 and His-239 together coordinate Fe cation.

It belongs to the bacterial ring-hydroxylating dioxygenase alpha subunit family. In terms of assembly, homotrimer. The system is composed of an oxygenase subunit (BmoA) and a reductase subunit (BmoB). Maximal specific activity is obtained when the ratio of BmoA to BmoB is 5:1. The cofactor is [2Fe-2S] cluster. It depends on Fe cation as a cofactor.

It catalyses the reaction glycine betaine + NADH + O2 + H(+) = N,N-dimethylglycine + formaldehyde + NAD(+) + H2O. Activity is absolutely dependent on the presence of BmoB. Glycine betaine monooxygenase activity is significantly enhanced by Fe(2+) and severely inhibited by heavy-metal ions, including Co(2+), Mn(2+), Zn(2+), Cu(2+) and Ag(+). Severely inhibited by EDTA. Its function is as follows. Involved in degradation of glycine betaine. Part of a Rieske-type oxygenase system that catalyzes the conversion of glycine betaine (GB) to dimethylglycine (DMG). This subunit is the terminal oxygenase component of the system. Is specific for GB, and does not show any activity on choline, L-carnitine, stachydrine, dimethylglycine or sarcosine. Activity is strictly dependent on NADH. This Chromohalobacter salexigens (strain ATCC BAA-138 / DSM 3043 / CIP 106854 / NCIMB 13768 / 1H11) protein is Glycine betaine monooxygenase oxygenase subunit.